The chain runs to 342 residues: Fructose-1,6-bisphosphatase class 1 (342 aa).

Mg(2+) is bound by residues E97, D119, L121, and D122. Residues 122 to 125 (DGSS), N215, Y247, and K280 each bind substrate. E286 provides a ligand contact to Mg(2+).

This sequence belongs to the FBPase class 1 family. Homotetramer. The cofactor is Mg(2+).

It localises to the cytoplasm. It catalyses the reaction beta-D-fructose 1,6-bisphosphate + H2O = beta-D-fructose 6-phosphate + phosphate. It functions in the pathway carbohydrate biosynthesis; gluconeogenesis. In Leptospira borgpetersenii serovar Hardjo-bovis (strain JB197), this protein is Fructose-1,6-bisphosphatase class 1.